We begin with the raw amino-acid sequence, 966 residues long: Calsyntenin-2 (966 aa).

The N-terminal stretch at 1 to 20 (MLPGRLCLVPLLLALGVGSG) is a signal peptide. The Extracellular segment spans residues 21 to 835 (GGSGDGGDSR…SIQRSSVVPS (815 aa)). 2 Cadherin domains span residues 46 to 162 (IETS…APTF) and 163 to 282 (KEPA…MPLF). Residues Asn-58 and Asn-100 are each glycosylated (N-linked (GlcNAc...) asparagine). Residues Asn-344, Asn-376, Asn-720, and Asn-733 are each glycosylated (N-linked (GlcNAc...) asparagine). A helical transmembrane segment spans residues 836–856 (IATVVIIISVCMLVFVVAMGV). At 857 to 966 (YRVRIAHQHF…NTAGVINIWK (110 aa)) the chain is on the cytoplasmic side. Residues 890-966 (NPMEKHEGPG…NTAGVINIWK (77 aa)) form a disordered region. Acidic residues predominate over residues 901-916 (GEDETTEVEEEEEAEE). The span at 943–960 (QSGTSSQSPERSTWNTAG) shows a compositional bias: polar residues.

The protein belongs to the calsyntenin family. Post-translationally, proteolytically processed under normal cellular conditions. A primary zeta-cleavage generates a large extracellular (soluble) N-terminal domain (sAlc) and a short C-terminal transmembrane fragment (CTF1). A secondary cleavage catalyzed by gamma-secretase within the transmembrane domain releases the beta-Alc-gamma chain in the extracellular milieu and produces an intracellular fragment (AlcICD). This processing is strongly suppressed in the tripartite complex formed with APBA2 and APP, which seems to prevent the association with PSEN1. As to expression, restricted to the brain. In the cerebral cortex, found in the somas and neuropil of all layers. Expressed at highest levels in neurons of cortical layers 5 and 6 and, at lower levels, in neurons of the upper layers. Highly expressed in Purkinje cells. Also found in a few scattered interneurons throughout the granule cell layer and occasionally in neurons in the molecular layer (at protein level). Present throughout all cortical layers, highest levels in GABAergic neurons (based on morphology and distribution pattern).

Its subcellular location is the postsynaptic cell membrane. It localises to the endoplasmic reticulum membrane. It is found in the golgi apparatus membrane. The protein resides in the cell projection. The protein localises to the dendrite. In terms of biological role, postsynaptic adhesion molecule that binds to presynaptic neurexins to mediate synapse formation, and which is involved in learning and memory. Promotes synapse development by acting as a cell adhesion molecule at the postsynaptic membrane, which associates with neurexin-alpha at the presynaptic membrane. This is Calsyntenin-2 from Mus musculus (Mouse).